We begin with the raw amino-acid sequence, 117 residues long: Type II secretion system protein I (117 aa).

The propeptide at 1–6 (MKSKRG) is leader sequence. The residue at position 7 (F7) is an N-methylphenylalanine. Residues 7–27 (FTLLEVLVALAIFATAAISVI) traverse the membrane as a helical segment.

It belongs to the GSP I family. As to quaternary structure, type II secretion is composed of four main components: the outer membrane complex, the inner membrane complex, the cytoplasmic secretion ATPase and the periplasm-spanning pseudopilus. Interacts with core component EpsG. Cleaved by prepilin peptidase. In terms of processing, methylated by prepilin peptidase at the amino group of the N-terminal phenylalanine once the leader sequence is cleaved by prepilin peptidase.

It localises to the cell inner membrane. In terms of biological role, component of the type II secretion system required for the energy-dependent secretion of extracellular factors such as proteases and toxins from the periplasm. Part of the pseudopilus tip complex that is critical for the recognition and binding of secretion substrates. In Vibrio cholerae serotype O1 (strain ATCC 39315 / El Tor Inaba N16961), this protein is Type II secretion system protein I (epsI).